Consider the following 202-residue polypeptide: Probable septum site-determining protein MinC (202 aa).

Belongs to the MinC family. As to quaternary structure, interacts with MinD and FtsZ.

Functionally, cell division inhibitor that blocks the formation of polar Z ring septums. Rapidly oscillates between the poles of the cell to destabilize FtsZ filaments that have formed before they mature into polar Z rings. Prevents FtsZ polymerization. The polypeptide is Probable septum site-determining protein MinC (Dictyoglomus turgidum (strain DSM 6724 / Z-1310)).